A 557-amino-acid polypeptide reads, in one-letter code: Dihydroxy-acid dehydratase (557 aa).

C49 contributes to the [2Fe-2S] cluster binding site. Residue D81 participates in Mg(2+) binding. Position 122 (C122) interacts with [2Fe-2S] cluster. D123 and K124 together coordinate Mg(2+). K124 is subject to N6-carboxylysine. C194 lines the [2Fe-2S] cluster pocket. Residue E446 participates in Mg(2+) binding. The active-site Proton acceptor is S472.

Belongs to the IlvD/Edd family. As to quaternary structure, homodimer. [2Fe-2S] cluster is required as a cofactor. The cofactor is Mg(2+).

The enzyme catalyses (2R)-2,3-dihydroxy-3-methylbutanoate = 3-methyl-2-oxobutanoate + H2O. It catalyses the reaction (2R,3R)-2,3-dihydroxy-3-methylpentanoate = (S)-3-methyl-2-oxopentanoate + H2O. It functions in the pathway amino-acid biosynthesis; L-isoleucine biosynthesis; L-isoleucine from 2-oxobutanoate: step 3/4. It participates in amino-acid biosynthesis; L-valine biosynthesis; L-valine from pyruvate: step 3/4. Its function is as follows. Functions in the biosynthesis of branched-chain amino acids. Catalyzes the dehydration of (2R,3R)-2,3-dihydroxy-3-methylpentanoate (2,3-dihydroxy-3-methylvalerate) into 2-oxo-3-methylpentanoate (2-oxo-3-methylvalerate) and of (2R)-2,3-dihydroxy-3-methylbutanoate (2,3-dihydroxyisovalerate) into 2-oxo-3-methylbutanoate (2-oxoisovalerate), the penultimate precursor to L-isoleucine and L-valine, respectively. This chain is Dihydroxy-acid dehydratase, found in Prochlorococcus marinus (strain MIT 9301).